A 331-amino-acid chain; its full sequence is (+)-aristolochene synthase TS1 (331 aa).

The disordered stretch occupies residues 1-22 (MTRMKNSSSNVTSASGSGSGSG). Positions 7–16 (SSSNVTSASG) are enriched in low complexity. Residues Asp-102, Asn-231, Ser-235, and Glu-239 each contribute to the Mg(2+) site. The short motif at 102–106 (DDLLE) is the DDxx(x)D/E motif element. An NDxxSxxxD/E motif motif is present at residues 231 to 239 (NDVYSYEKE). 2 residues coordinate (2E,6E)-farnesyl diphosphate: Arg-326 and Tyr-327.

The protein belongs to the terpene synthase family. Homodimer. Mg(2+) serves as cofactor.

It catalyses the reaction (2E,6E)-farnesyl diphosphate = (+)-aristolochene + diphosphate. It functions in the pathway sesquiterpene biosynthesis; aristolochene biosynthesis; aristolochene from farnesyl diphosphate: step 1/1. Catalyzes the cyclization of trans,trans-farnesyl diphosphate (FPP) to the bicyclic sesquiterpene aristolochene. Aristolochene is the likely parent compound for a number of sesquiterpenoid toxins produced by filamentous fungi. This Penicillium expansum (Blue mold rot fungus) protein is (+)-aristolochene synthase TS1.